The primary structure comprises 625 residues: MQNTAKKATLPATALAALGVVFGDIGTSPLYALKESFHAAHGLGIQPENVLGILSIIFWCLMLIISIKYVAIVMRADNNGEGGIMALLALNLRKAKIADNKKIYMIAIGFIGASLFFGDGIITPAISVLSAVEGLSIATDVFDPFIMPIAIAIIVTLFLVQKHGTAFVGKFFGPITLVWFLSLGILGIHSVIQTPVVLGMFSPHWAIQFIYHHPIMTFFVMGAVVLTVTGGEALYADMGHFGPVPIRLAWFFVVLPCLVLNYAGQGALLLRDPAAIENPFYLLVPQWALYPMIIMATMATVIASQAVISGVFSLARQAIQLGYLPRLSIKHTSESEEGQIYVPFLNWLLLIAIIILILIFKTSSNLASAYGLAVTLTMLCDTILVAVFIYSAWKWSLPKVLLLIIPFFILESVLVGATSLKILSGGWVPLLIGAIAVTILMTWKRGRELTFAKLEHDTLSLDLFVKSIGNSVHWVPGDAVFMTGTPNVVPHAMLHNIKHNKVLHQRNILVTVVIEDVPFVAPEERITTETLAEHFFRIKIFYGFKDEMNVPKALLQAYEQLGLEYDLMHISFFISRDRIVHSVGDGMSPWREKLFISMQRNTSPVSDFYQIPTNRVVELGSQIEI.

The next 12 membrane-spanning stretches (helical) occupy residues 13–33 (TALAALGVVFGDIGTSPLYAL), 53–73 (ILSIIFWCLMLIISIKYVAIV), 103–123 (IYMIAIGFIGASLFFGDGIIT), 141–161 (VFDPFIMPIAIAIIVTLFLVQ), 172–192 (FGPITLVWFLSLGILGIHSVI), 206–226 (AIQFIYHHPIMTFFVMGAVVL), 250–270 (WFFVVLPCLVLNYAGQGALLL), 282–302 (LLVPQWALYPMIIMATMATVI), 340–360 (IYVPFLNWLLLIAIIILILIF), 369–389 (AYGLAVTLTMLCDTILVAVFI), 400–420 (VLLLIIPFFILESVLVGATSL), and 422–442 (ILSGGWVPLLIGAIAVTILMT).

Belongs to the HAK/KUP transporter (TC 2.A.72) family.

It is found in the cell inner membrane. The catalysed reaction is K(+)(in) + H(+)(in) = K(+)(out) + H(+)(out). Transport of potassium into the cell. Likely operates as a K(+):H(+) symporter. This chain is Probable potassium transport system protein Kup, found in Acinetobacter baumannii (strain AYE).